Reading from the N-terminus, the 29-residue chain is GCTPEYCSMWCKVKVSQNYCVKNCKCPGR.

Disulfide bonds link C2-C20, C7-C24, and C11-C26.

This sequence belongs to the short scorpion toxin superfamily. Potassium channel inhibitor family. Alpha-KTx 20 subfamily. Expressed by the venom gland.

The protein localises to the secreted. Functionally, reduces potassium currents through Kv1.2/KCNA2 and Kv1.3/KCNA3 voltage-gated potassium channels. The sequence is that of Potassium channel toxin alpha-KTx 20.1 from Tityus trivittatus (Argentinean scorpion).